Here is a 143-residue protein sequence, read N- to C-terminus: Insulin-like growth factor 1 (143 aa).

An N-terminal signal peptide occupies residues 1–32; it reads MITPTVKMRILSSSHLFYLALCLLTFTSSATA. Residues 33–61 are b; sequence GPETLCGAELVDALQFVCGDRGFYFNKPT. 3 disulfides stabilise this stretch: C38/C80, C50/C93, and C79/C84. The segment at 62 to 73 is c; that stretch reads GYGSSSRRAPQT. Residues 74-94 form an a region; that stretch reads GIVDECCFRSCDLRRLEMYCA. The tract at residues 95–102 is d; it reads PLKPAKAA. The tract at residues 99-143 is disordered; it reads AKAARSVRAQRHTDMPKTQKYQPPSTNKKMKSQRRRKGSTFEEHK. Residues 103–143 constitute a propeptide, e peptide; sequence RSVRAQRHTDMPKTQKYQPPSTNKKMKSQRRRKGSTFEEHK. The segment covering 126–136 has biased composition (basic residues); sequence KKMKSQRRRKG.

It belongs to the insulin family. Forms a ternary complex with IGFR1 and ITGAV:ITGB3. Forms a ternary complex with IGFR1 and ITGA6:ITGB4. Forms a ternary complex with IGFBP3 and ALS.

The protein localises to the secreted. Functionally, the insulin-like growth factors, isolated from plasma, are structurally and functionally related to insulin but have a much higher growth-promoting activity. May be a physiological regulator of [1-14C]-2-deoxy-D-glucose (2DG) transport and glycogen synthesis in osteoblasts. Stimulates glucose transport in bone-derived osteoblastic (PyMS) cells and is effective at much lower concentrations than insulin, not only regarding glycogen and DNA synthesis but also with regard to enhancing glucose uptake. May play a role in synapse maturation. Ca(2+)-dependent exocytosis of IGF1 is required for sensory perception of smell in the olfactory bulb. Acts as a ligand for IGF1R. Binds to the alpha subunit of IGF1R, leading to the activation of the intrinsic tyrosine kinase activity which autophosphorylates tyrosine residues in the beta subunit thus initiating a cascade of down-stream signaling events leading to activation of the PI3K-AKT/PKB and the Ras-MAPK pathways. Binds to integrins ITGAV:ITGB3 and ITGA6:ITGB4. Its binding to integrins and subsequent ternary complex formation with integrins and IGFR1 are essential for IGF1 signaling. Induces the phosphorylation and activation of IGFR1, MAPK3/ERK1, MAPK1/ERK2 and AKT1. As part of the MAPK/ERK signaling pathway, acts as a negative regulator of apoptosis in cardiomyocytes via promotion of STUB1/CHIP-mediated ubiquitination and degradation of ICER-type isoforms of CREM. The chain is Insulin-like growth factor 1 from Oryctolagus cuniculus (Rabbit).